We begin with the raw amino-acid sequence, 469 residues long: Tetratricopeptide repeat protein 38 (469 aa).

Ala-2 carries the post-translational modification N-acetylalanine. A Phosphoserine modification is found at Ser-5. TPR repeat units follow at residues 108 to 141, 180 to 213, and 252 to 285; these read REQL…HPTD, SYVK…NPTD, and CHNY…SLQA.

This sequence belongs to the TTC38 family.

The sequence is that of Tetratricopeptide repeat protein 38 (TTC38) from Homo sapiens (Human).